The sequence spans 313 residues: 4-diphosphocytidyl-2-C-methyl-D-erythritol kinase (313 aa).

Residue lysine 11 is part of the active site. Proline 99–threonine 109 contributes to the ATP binding site. The active site involves aspartate 141.

The protein belongs to the GHMP kinase family. IspE subfamily.

The enzyme catalyses 4-CDP-2-C-methyl-D-erythritol + ATP = 4-CDP-2-C-methyl-D-erythritol 2-phosphate + ADP + H(+). It participates in isoprenoid biosynthesis; isopentenyl diphosphate biosynthesis via DXP pathway; isopentenyl diphosphate from 1-deoxy-D-xylulose 5-phosphate: step 3/6. Its function is as follows. Catalyzes the phosphorylation of the position 2 hydroxy group of 4-diphosphocytidyl-2C-methyl-D-erythritol. This chain is 4-diphosphocytidyl-2-C-methyl-D-erythritol kinase, found in Microcystis aeruginosa (strain NIES-843 / IAM M-2473).